Here is an 894-residue protein sequence, read N- to C-terminus: MTTNNPFDKVKDVLKSQDQTYNFYNLSKLQDPRIEKLPYSIRILLESAVRNCDNFEVHEKDVENILNWENTANKVEIPFKPARVLLQDFTGVPAVVDLAAMRDAMKRLGGDPAKINPLVPVDLVIDHSVQVDVSRTVDALEQNQKIEFHRNHERFSFLKWGAQAFDGLFIAPPGSGIVHQVNLEYIAREVMNGTGNLLYPDSVVGTDSHTTMINGLGVCGWGVGGIEAEAVMLGQPMSMVLPEVVGYKFVGKLPDIATATDLVLTVTNELRKKGVVGKFVEFYGEGVSTLSVQDRATISNMAPEYGATMGFFPADENTIDYLASTGRSNTKIEYIKNYLSSQGLMCNYKSQSHPIFTTTMELDLSTVVPSLSGPKRPHDRISLNSMKQDFNSCLSSPVGFKGFGLTADQIQKKATFTFKDKQYTIGHGAVTIAAITSCTNTSNPSVMLGAGLLAKNAVEHGLEVAPYIKTSLSPGSGVVTEYFSHSGLQEPLNKLGFDLTGYGCMTCIGNSGELAEPLAEAITKEDLVVAGVLSGNRNFEGRIHPLLRANYLASPPLVVAYALAGTVDIDFETTPLGVSKKTGQPVFLRDIWPSKDLIQQTIKSSVLPDMYERVYSNVNDGNKSWNELKVPTGLLYPWDEKSTYIHNPPFFKTMELTVSKRPAITNAYCLLNLGDSITTDHISPAGNINRKSSAARYLESKGVKPEDFNTYGSRRGNDEIMVRGTFANTRIVNKLAPAVGPQTTYVPTGELMFISDAAEKYQSEGHQLIVLAGSDYGSGSSRDWAAKGPYLQGIKCVIAISFERIHRSNLVGMGIIPLQFQPGQNASTLGLTGKEQFNIELPTDKSLIKTGQTVKVTTNCGKSFETILRFDTPIEVEYWANNGILSYVLRKLLH.

Substrate contacts are provided by residues Gln87 and 207 to 209 (DSH). Residues Cys438, Cys504, and Cys507 each contribute to the [4Fe-4S] cluster site. Residues Arg537, Arg542, and 781–782 (SR) each bind substrate.

Belongs to the aconitase/IPM isomerase family. Requires [4Fe-4S] cluster as cofactor.

It localises to the cytoplasm. The protein localises to the cytosol. The enzyme catalyses citrate = D-threo-isocitrate. Its function is as follows. Catalyzes the isomerization of citrate to isocitrate via cis-aconitate. The chain is Probable cytoplasmic aconitate hydratase (aco1) from Dictyostelium discoideum (Social amoeba).